The following is a 330-amino-acid chain: DNA-directed RNA polymerase I subunit RPA43 (330 aa).

The segment at 251–330 (ADVTDVTPQE…ANFESPKKRQ (80 aa)) is disordered. 3 positions are modified to phosphoserine: S306, S318, and S325. Positions 317-330 (HSEEANFESPKKRQ) are enriched in basic and acidic residues.

The protein belongs to the eukaryotic RPA43 RNA polymerase subunit family. In terms of assembly, component of the RNA polymerase I (Pol I) complex consisting of 13 subunits: a ten-subunit catalytic core composed of POLR1A/RPA1, POLR1B/RPA2, POLR1C/RPAC1, POLR1D/RPAC2, POLR1H/RPA12, POLR2E/RPABC1, POLR2F/RPABC2, POLR2H/RPABC3, POLR2K/RPABC4 and POLR2L/RPABC5; a mobile stalk subunit POLR1F/RPA43 protruding from the core and additional subunits homologous to general transcription factors POLR1E/RPA49 and POLR1G/RPA34. Interacts with RRN3/TIF-IA. Interacts with RRN3/TIF-IA. As to expression, widely expressed.

Its subcellular location is the nucleus. It localises to the nucleolus. Its function is as follows. Component of RNA polymerase I (Pol I), a DNA-dependent RNA polymerase which synthesizes ribosomal RNA precursors using the four ribonucleoside triphosphates as substrates. Through its association with RRN3/TIF-IA may be involved in recruitment of Pol I to rDNA promoters. This Mus musculus (Mouse) protein is DNA-directed RNA polymerase I subunit RPA43.